Reading from the N-terminus, the 327-residue chain is Annexin A8 (327 aa).

Annexin repeat units lie at residues 21–92 (FNPD…ALMY), 93–164 (PPYR…CLLQ), 177–249 (GLAL…TVVK), and 253–324 (NLHS…SLVG). Residues methionine 266, glycine 268, glycine 270, and aspartate 310 each coordinate Ca(2+).

Belongs to the annexin family.

In terms of biological role, this protein is an anticoagulant protein that acts as an indirect inhibitor of the thromboplastin-specific complex, which is involved in the blood coagulation cascade. This Homo sapiens (Human) protein is Annexin A8.